The chain runs to 404 residues: Protein translocase subunit SecD (404 aa).

6 consecutive transmembrane segments (helical) span residues 7–27 (HYIW…FNKV), 239–259 (LIAL…PGIV), 262–282 (IALL…GAAL), 283–303 (TLPG…SNVI), 330–350 (FPAI…LFFL), and 357–377 (GFAV…VFVS).

This sequence belongs to the SecD/SecF family. SecD subfamily. Forms a complex with SecF. Part of the essential Sec protein translocation apparatus which comprises SecA, SecYEG and auxiliary proteins SecDF. Other proteins may also be involved.

It localises to the cell inner membrane. Its function is as follows. Part of the Sec protein translocase complex. Interacts with the SecYEG preprotein conducting channel. SecDF uses the proton motive force (PMF) to complete protein translocation after the ATP-dependent function of SecA. In Leptotrichia buccalis (strain ATCC 14201 / DSM 1135 / JCM 12969 / NCTC 10249 / C-1013-b), this protein is Protein translocase subunit SecD.